The sequence spans 137 residues: Phosphoinositide-interacting protein (137 aa).

The next 2 helical transmembrane spans lie at 56 to 76 (IVIM…TCLA) and 94 to 114 (PGFL…VPII).

Interacts with TRPV1.

It is found in the membrane. Regulatory subunit of TRPV1, a molecular sensor of noxious heat and capsaicin. Positively regulates TRPV1 channel activity via phosphatidylinositol 4,5-bisphosphate (PIP2). Binds various phosphoinositide, including phosphatidylinositol 4,5-bisphosphate (PIP2), but not phosphatidylinositol (PI). The chain is Phosphoinositide-interacting protein (PIRT) from Homo sapiens (Human).